We begin with the raw amino-acid sequence, 186 residues long: Membrane protein Rv1476 (186 aa).

The chain crosses the membrane as a helical span at residues 138–158; that stretch reads FPWSALTIVLLIGVLAAAVGA. Residues 166-186 are disordered; it reads RRSATSTDAAPGAGDDLNQGV.

The protein resides in the membrane. Functionally, may affect the expression of genes linked to host macrophage apoptosis and immune response, thereby promoting the survival of M.tuberculosis in host macrophages. Overexpression of the gene increases susceptibility of the bacteria to various stresses, but promotes intracellular survival in host macrophages. It has no impact on the growth rate in vitro. Overexpression causes changes in the transcriptome of THP-1 cells, including expression of genes involved in cell proliferation, fatty acid degradation, cytokine-cytokine receptor interaction and immune response pathways. In Mycobacterium tuberculosis (strain ATCC 25618 / H37Rv), this protein is Membrane protein Rv1476.